Reading from the N-terminus, the 322-residue chain is Phosphatidylglycerol--prolipoprotein diacylglyceryl transferase (322 aa).

The next 4 helical transmembrane spans lie at 21–41 (PLPI…AIWL), 50–70 (GGNP…GIIG), 98–118 (NGGL…WAYF), and 123–143 (IPLA…QAIG). Arg-144 lines the a 1,2-diacyl-sn-glycero-3-phospho-(1'-sn-glycerol) pocket. 2 helical membrane-spanning segments follow: residues 191-211 (VHPT…LLIW) and 254-274 (INTL…LRLG). The disordered stretch occupies residues 283–322 (VDPAYHAAQAERDDTETAGLDATTGTVPGDSPETTGKKRK).

It belongs to the Lgt family.

It localises to the cell membrane. The enzyme catalyses L-cysteinyl-[prolipoprotein] + a 1,2-diacyl-sn-glycero-3-phospho-(1'-sn-glycerol) = an S-1,2-diacyl-sn-glyceryl-L-cysteinyl-[prolipoprotein] + sn-glycerol 1-phosphate + H(+). The protein operates within protein modification; lipoprotein biosynthesis (diacylglyceryl transfer). Functionally, catalyzes the transfer of the diacylglyceryl group from phosphatidylglycerol to the sulfhydryl group of the N-terminal cysteine of a prolipoprotein, the first step in the formation of mature lipoproteins. The protein is Phosphatidylglycerol--prolipoprotein diacylglyceryl transferase of Corynebacterium efficiens (strain DSM 44549 / YS-314 / AJ 12310 / JCM 11189 / NBRC 100395).